A 295-amino-acid polypeptide reads, in one-letter code: Protoheme IX farnesyltransferase (295 aa).

The next 9 membrane-spanning stretches (helical) occupy residues 8–28 (VTKPGIIFGNLISVIGGFLLA), 35–55 (YPLFVWTLLGVSLVVASGCVF), 84–104 (ASLVYATLLGIAGFMLLWFGA), 107–127 (LACWLGVMGFVVYVGVYSLYM), 132–152 (VYGTLIGSLSGAAPPVIGYCA), 162–182 (AILLAIFSLWQMPHSYAIAIF), 208–228 (ITLYIVAFAVATLMLSLGGYA), 233–253 (LVVAAAVSVWWLGMALRGYKV), and 264–284 (FVFSIVAITALSVMMSVDFMV).

It belongs to the UbiA prenyltransferase family. Protoheme IX farnesyltransferase subfamily.

It localises to the cell inner membrane. The catalysed reaction is heme b + (2E,6E)-farnesyl diphosphate + H2O = Fe(II)-heme o + diphosphate. It participates in porphyrin-containing compound metabolism; heme O biosynthesis; heme O from protoheme: step 1/1. In terms of biological role, converts heme B (protoheme IX) to heme O by substitution of the vinyl group on carbon 2 of heme B porphyrin ring with a hydroxyethyl farnesyl side group. This Klebsiella pneumoniae subsp. pneumoniae (strain ATCC 700721 / MGH 78578) protein is Protoheme IX farnesyltransferase.